The sequence spans 561 residues: Asparagine synthetase [glutamine-hydrolyzing] (561 aa).

Cys2 (for GATase activity) is an active-site residue. The Glutamine amidotransferase type-2 domain maps to 2–191 (CGIWALFGSD…PGHYEVLDLK (190 aa)). L-glutamine is bound by residues 49–53 (RLAVV), 75–77 (NGE), and Asp97. Positions 213-536 (HALYDGVEKL…PGRADWLPHY (324 aa)) constitute an Asparagine synthetase domain. ATP-binding positions include Leu256, Ile288, and 363 to 364 (SG). Position 385 is an N6-acetyllysine (Lys385). At Thr545 the chain carries Phosphothreonine.

The catalysed reaction is L-aspartate + L-glutamine + ATP + H2O = L-asparagine + L-glutamate + AMP + diphosphate + H(+). It functions in the pathway amino-acid biosynthesis; L-asparagine biosynthesis; L-asparagine from L-aspartate (L-Gln route): step 1/1. The polypeptide is Asparagine synthetase [glutamine-hydrolyzing] (ASNS) (Bos taurus (Bovine)).